Reading from the N-terminus, the 303-residue chain is Putative deoxyribose-phosphate aldolase (303 aa).

Catalysis depends on Asp-157, which acts as the Proton donor/acceptor. Lys-220 (schiff-base intermediate with acetaldehyde) is an active-site residue. Lys-256 functions as the Proton donor/acceptor in the catalytic mechanism.

This sequence belongs to the DeoC/FbaB aldolase family. DeoC type 2 subfamily.

It catalyses the reaction 2-deoxy-D-ribose 5-phosphate = D-glyceraldehyde 3-phosphate + acetaldehyde. It functions in the pathway carbohydrate degradation; 2-deoxy-D-ribose 1-phosphate degradation; D-glyceraldehyde 3-phosphate and acetaldehyde from 2-deoxy-alpha-D-ribose 1-phosphate: step 2/2. Its function is as follows. Catalyzes a reversible aldol reaction between acetaldehyde and D-glyceraldehyde 3-phosphate to generate 2-deoxy-D-ribose 5-phosphate. This is Putative deoxyribose-phosphate aldolase from Caenorhabditis elegans.